A 277-amino-acid polypeptide reads, in one-letter code: Inositol monophosphatase 1 (277 aa).

Mg(2+) is bound by residues Glu-70, Asp-90, Ile-92, and Asp-93. Glu-70 serves as a coordination point for substrate. 92–95 (IDGT) contributes to the substrate binding site. Phosphothreonine is present on Thr-168. Substrate is bound by residues 194–196 (GTA), Glu-213, and Asp-220. Residue Asp-220 coordinates Mg(2+).

It belongs to the inositol monophosphatase superfamily. In terms of assembly, homodimer. Requires Mg(2+) as cofactor.

The protein localises to the cytoplasm. The catalysed reaction is a myo-inositol phosphate + H2O = myo-inositol + phosphate. It catalyses the reaction 1D-myo-inositol 1-phosphate + H2O = myo-inositol + phosphate. It carries out the reaction 1D-myo-inositol 2-phosphate + H2O = myo-inositol + phosphate. The enzyme catalyses 1D-myo-inositol 3-phosphate + H2O = myo-inositol + phosphate. The catalysed reaction is 1D-myo-inositol 4-phosphate + H2O = myo-inositol + phosphate. It catalyses the reaction 1D-myo-inositol 5-phosphate + H2O = myo-inositol + phosphate. It carries out the reaction 1D-myo-inositol 6-phosphate + H2O = myo-inositol + phosphate. The enzyme catalyses scyllo-inositol 1-phosphate + H2O = scyllo-inositol + phosphate. The catalysed reaction is alpha-D-galactose 1-phosphate + H2O = D-galactose + phosphate. It catalyses the reaction alpha-D-glucose 1-phosphate + H2O = D-glucose + phosphate. It carries out the reaction D-glucose 6-phosphate + H2O = D-glucose + phosphate. The enzyme catalyses beta-D-fructose 1-phosphate + H2O = D-fructose + phosphate. The catalysed reaction is glycerol 2-phosphate + H2O = glycerol + phosphate. It catalyses the reaction adenosine 2'-phosphate + H2O = adenosine + phosphate. The protein operates within polyol metabolism; myo-inositol biosynthesis; myo-inositol from D-glucose 6-phosphate: step 2/2. With respect to regulation, inhibited by Li(+), Ca(2+) and Mn(2+), but also by Mg(2+) at concentrations above 3 mM. Phosphatase involved in the dephosphorylation of myo-inositol monophosphate to generate myo-inositol. Is also able to dephosphorylate scyllo-inositol-phosphate, myo-inositol 1,4-diphosphate, scyllo-inositol-1,3-diphosphate and scyllo-inositol-1,4-diphosphate. Also dephosphorylates in vitro other sugar-phosphates including D-galactose-1-phosphate, glucose-1-phosphate, glucose-6-phosphate, fructose-1-phosphate, beta-glycerophosphate and 2'-AMP. Responsible for the provision of inositol required for synthesis of phosphatidylinositol and polyphosphoinositides, and involved in maintaining normal brain function. Has been implicated as the pharmacological target for lithium Li(+) action in brain. The sequence is that of Inositol monophosphatase 1 (IMPA1) from Pongo abelii (Sumatran orangutan).